A 409-amino-acid chain; its full sequence is Transcriptional regulator GME11370 (409 aa).

A DNA-binding region (zn(2)-C6 fungal-type) is located at residues Cys-17 to Cys-44. Residues Thr-49–Asp-83 are disordered. The segment covering Arg-51–Lys-62 has biased composition (basic residues).

It is found in the nucleus. Functionally, transcriptional regulator; part of the gene cluster that mediates the biosynthesis of dibenzodioxocinones such as pestalotiollide B, a novel class of inhibitors against cholesterol ester transfer protein (CEPT). In Pestalotiopsis microspora, this protein is Transcriptional regulator GME11370.